The chain runs to 490 residues: Bifunctional pantoate ligase/cytidylate kinase (490 aa).

An ATP-binding site is contributed by 1–8; it reads MGGLHQGH. Positions 1–253 are pantoate--beta-alanine ligase; sequence MGGLHQGHAR…CGETRLIDHV (253 aa). Histidine 8 (proton donor) is an active-site residue. Glutamine 35 contacts (R)-pantoate. Glutamine 35 serves as a coordination point for beta-alanine. Residue 124 to 127 participates in ATP binding; that stretch reads GEKD. Glutamine 130 lines the (R)-pantoate pocket. ATP contacts are provided by residues valine 153 and 161–164; that span reads ASSR. The tract at residues 254–490 is cytidylate kinase; sequence FIMTRSPIVA…AKEIWPTPQG (237 aa).

In the N-terminal section; belongs to the pantothenate synthetase family. This sequence in the C-terminal section; belongs to the cytidylate kinase family. Type 1 subfamily.

Its subcellular location is the cytoplasm. The enzyme catalyses (R)-pantoate + beta-alanine + ATP = (R)-pantothenate + AMP + diphosphate + H(+). The catalysed reaction is CMP + ATP = CDP + ADP. It carries out the reaction dCMP + ATP = dCDP + ADP. It functions in the pathway cofactor biosynthesis; (R)-pantothenate biosynthesis; (R)-pantothenate from (R)-pantoate and beta-alanine: step 1/1. Its function is as follows. Catalyzes the condensation of pantoate with beta-alanine in an ATP-dependent reaction via a pantoyl-adenylate intermediate. Functionally, catalyzes the transfer of a phosphate group from ATP to either CMP or dCMP to form CDP or dCDP and ADP, respectively. This chain is Bifunctional pantoate ligase/cytidylate kinase, found in Synechococcus sp. (strain WH7803).